Reading from the N-terminus, the 280-residue chain is NAD kinase (280 aa).

Aspartate 60 acts as the Proton acceptor in catalysis. NAD(+)-binding positions include 60–61 (DG), 134–135 (ND), arginine 145, aspartate 164, 175–180 (TAYSLS), and glutamine 234.

The protein belongs to the NAD kinase family. A divalent metal cation is required as a cofactor.

Its subcellular location is the cytoplasm. The catalysed reaction is NAD(+) + ATP = ADP + NADP(+) + H(+). Involved in the regulation of the intracellular balance of NAD and NADP, and is a key enzyme in the biosynthesis of NADP. Catalyzes specifically the phosphorylation on 2'-hydroxyl of the adenosine moiety of NAD to yield NADP. This is NAD kinase from Carboxydothermus hydrogenoformans (strain ATCC BAA-161 / DSM 6008 / Z-2901).